The chain runs to 127 residues: MDCRVVVEAAVPVYDVQSTDEAVRIAISKTGEMLNPDLNYVEIEMGSRSCPHCGTDTEPAFVAADESLVALELSMTVFNVERDEHAARIARKEIGQRLANIPLAVLEVDTVTDDDTQESTGGDTETA.

This sequence belongs to the UPF0212 family.

The chain is UPF0212 protein VNG_1264C from Halobacterium salinarum (strain ATCC 700922 / JCM 11081 / NRC-1) (Halobacterium halobium).